The following is a 1191-amino-acid chain: Puratrophin-1 (1191 aa).

Disordered stretches follow at residues 1 to 152 (MERP…DPVG) and 707 to 728 (AGGG…SDPR). At S64 the chain carries Phosphoserine. A compositionally biased stretch (polar residues) spans 111–120 (SHLSLAQGES). The DH domain maps to 732–908 (RLQLVLAEMV…HFQLRHGNDL (177 aa)). The PH domain maps to 920 to 1027 (NLKEQGQLVR…WTADISHLLW (108 aa)). A disordered region spans residues 1150–1176 (SLTAEDSEISSQCPSASGSSGSDSSCV). Positions 1159–1176 (SSQCPSASGSSGSDSSCV) are enriched in low complexity.

Expressed in kidney, Leydig cells in the testis, epithelial cells in the prostate gland and Langerhans islet in the pancreas. Isoform 1 and isoform 3 are strongly expressed in Purkinje cells and to a lower extent in other neurons (at protein level). Widely expressed at low levels. More strongly expressed in testis and pancreas.

Possible role in intracellular signaling and cytoskeleton dynamics at the Golgi. This chain is Puratrophin-1 (PLEKHG4), found in Homo sapiens (Human).